The chain runs to 64 residues: Large ribosomal subunit protein bL28 (64 aa).

The segment at 1–21 is disordered; it reads MAKKDQLTLRGPLYGNNRSHS.

It belongs to the bacterial ribosomal protein bL28 family.

In Mycoplasma genitalium (strain ATCC 33530 / DSM 19775 / NCTC 10195 / G37) (Mycoplasmoides genitalium), this protein is Large ribosomal subunit protein bL28.